Reading from the N-terminus, the 335-residue chain is Holliday junction branch migration complex subunit RuvB (335 aa).

A large ATPase domain (RuvB-L) region spans residues 4–184; that stretch reads VDRIVSANAK…FGIVQRLEFY (181 aa). ATP-binding positions include Ile-23, Arg-24, Gly-65, Lys-68, Thr-69, Thr-70, 131–133, Arg-174, Tyr-184, and Arg-221; that span reads EDY. Thr-69 is a Mg(2+) binding site. The interval 185–255 is small ATPAse domain (RuvB-S); sequence SVEDLASIVT…IAQEALKMLD (71 aa). The segment at 258–335 is head domain (RuvB-H); the sequence is LAGFDFMDRK…RHFGLEQIEK (78 aa). DNA is bound by residues Arg-294, Arg-313, and Arg-318.

The protein belongs to the RuvB family. In terms of assembly, homohexamer. Forms an RuvA(8)-RuvB(12)-Holliday junction (HJ) complex. HJ DNA is sandwiched between 2 RuvA tetramers; dsDNA enters through RuvA and exits via RuvB. An RuvB hexamer assembles on each DNA strand where it exits the tetramer. Each RuvB hexamer is contacted by two RuvA subunits (via domain III) on 2 adjacent RuvB subunits; this complex drives branch migration. In the full resolvosome a probable DNA-RuvA(4)-RuvB(12)-RuvC(2) complex forms which resolves the HJ.

It localises to the cytoplasm. The enzyme catalyses ATP + H2O = ADP + phosphate + H(+). The RuvA-RuvB-RuvC complex processes Holliday junction (HJ) DNA during genetic recombination and DNA repair, while the RuvA-RuvB complex plays an important role in the rescue of blocked DNA replication forks via replication fork reversal (RFR). RuvA specifically binds to HJ cruciform DNA, conferring on it an open structure. The RuvB hexamer acts as an ATP-dependent pump, pulling dsDNA into and through the RuvAB complex. RuvB forms 2 homohexamers on either side of HJ DNA bound by 1 or 2 RuvA tetramers; 4 subunits per hexamer contact DNA at a time. Coordinated motions by a converter formed by DNA-disengaged RuvB subunits stimulates ATP hydrolysis and nucleotide exchange. Immobilization of the converter enables RuvB to convert the ATP-contained energy into a lever motion, pulling 2 nucleotides of DNA out of the RuvA tetramer per ATP hydrolyzed, thus driving DNA branch migration. The RuvB motors rotate together with the DNA substrate, which together with the progressing nucleotide cycle form the mechanistic basis for DNA recombination by continuous HJ branch migration. Branch migration allows RuvC to scan DNA until it finds its consensus sequence, where it cleaves and resolves cruciform DNA. The chain is Holliday junction branch migration complex subunit RuvB from Histophilus somni (strain 129Pt) (Haemophilus somnus).